Here is a 109-residue protein sequence, read N- to C-terminus: Nucleoid-associated protein BUsg_467 (109 aa).

It belongs to the YbaB/EbfC family. In terms of assembly, homodimer.

The protein resides in the cytoplasm. The protein localises to the nucleoid. In terms of biological role, binds to DNA and alters its conformation. May be involved in regulation of gene expression, nucleoid organization and DNA protection. This is Nucleoid-associated protein BUsg_467 from Buchnera aphidicola subsp. Schizaphis graminum (strain Sg).